Consider the following 139-residue polypeptide: Large ribosomal subunit protein uL14A (139 aa).

Belongs to the universal ribosomal protein uL14 family. In terms of assembly, component of the large ribosomal subunit (LSU). Mature yeast ribosomes consist of a small (40S) and a large (60S) subunit. The 40S small subunit contains 1 molecule of ribosomal RNA (18S rRNA) and at least 33 different proteins. The large 60S subunit contains 3 rRNA molecules (25S, 5.8S and 5S rRNA) and at least 46 different proteins.

It localises to the cytoplasm. Its subcellular location is the nucleus. Functionally, component of the ribosome, a large ribonucleoprotein complex responsible for the synthesis of proteins in the cell. The small ribosomal subunit (SSU) binds messenger RNAs (mRNAs) and translates the encoded message by selecting cognate aminoacyl-transfer RNA (tRNA) molecules. The large subunit (LSU) contains the ribosomal catalytic site termed the peptidyl transferase center (PTC), which catalyzes the formation of peptide bonds, thereby polymerizing the amino acids delivered by tRNAs into a polypeptide chain. The nascent polypeptides leave the ribosome through a tunnel in the LSU and interact with protein factors that function in enzymatic processing, targeting, and the membrane insertion of nascent chains at the exit of the ribosomal tunnel. The chain is Large ribosomal subunit protein uL14A (rpl2301) from Schizosaccharomyces pombe (strain 972 / ATCC 24843) (Fission yeast).